The following is an 81-amino-acid chain: Putative defensin-like protein 188 (81 aa).

A signal peptide spans M1 to S19. 4 disulfide bridges follow: C31-C81, C37-C57, C43-C75, and C47-C77.

This sequence belongs to the DEFL family.

The protein resides in the secreted. The sequence is that of Putative defensin-like protein 188 (LCR41) from Arabidopsis thaliana (Mouse-ear cress).